A 392-amino-acid chain; its full sequence is MYSSQASALPSRVIGLISGTSVDGIDAALVEITGTELDLKVELLAGKTYPYPAELRERILAVCAGEAISMLELADMDDAIALAFAQAAQNIQIGYQPVNLIGSHGQTVYHRPPKEAGVGKKTLGYTLQLGRGEMIAYLTGITTVSNFRVADIAVGGHGAPLVPRVDAFLLSHPHESRCIQNLGGIGNLAYIPARTDGWLSQIRGWDTGPSNSLLDLAVERLTAGAKTYDEDGQWAASGTPCYPLVEKWLTHEYFHLSPPKSTGRELFGVAYLNQCFQDAEPYQLSPADMLATLTELTVASIVHSYRTFLPQMPQRVFLCGGGSRNLYLKQRLQLALETIPVLTTDEAGVSADFKEAIAFAVLAHWRQLGIPGNLPTATGAPQEVLLGEIHQG.

19-26 (GTSVDGID) serves as a coordination point for ATP.

It belongs to the anhydro-N-acetylmuramic acid kinase family.

It carries out the reaction 1,6-anhydro-N-acetyl-beta-muramate + ATP + H2O = N-acetyl-D-muramate 6-phosphate + ADP + H(+). The protein operates within amino-sugar metabolism; 1,6-anhydro-N-acetylmuramate degradation. It functions in the pathway cell wall biogenesis; peptidoglycan recycling. Functionally, catalyzes the specific phosphorylation of 1,6-anhydro-N-acetylmuramic acid (anhMurNAc) with the simultaneous cleavage of the 1,6-anhydro ring, generating MurNAc-6-P. Is required for the utilization of anhMurNAc either imported from the medium or derived from its own cell wall murein, and thus plays a role in cell wall recycling. The polypeptide is Anhydro-N-acetylmuramic acid kinase (Trichormus variabilis (strain ATCC 29413 / PCC 7937) (Anabaena variabilis)).